A 156-amino-acid polypeptide reads, in one-letter code: Transcriptional repressor NrdR (156 aa).

The segment at 3–34 is a zinc-finger region; that stretch reads CPFCSETDTKVIDSRLVADGAQVRRRRECLTC. In terms of domain architecture, ATP-cone spans 49–139; that stretch reads PRVIKQDGTR…VYRSFQDLSE (91 aa).

It belongs to the NrdR family. The cofactor is Zn(2+).

In terms of biological role, negatively regulates transcription of bacterial ribonucleotide reductase nrd genes and operons by binding to NrdR-boxes. The sequence is that of Transcriptional repressor NrdR from Saccharophagus degradans (strain 2-40 / ATCC 43961 / DSM 17024).